Here is a 249-residue protein sequence, read N- to C-terminus: Eukaryotic translation initiation factor 6 (249 aa).

The protein belongs to the eIF-6 family. Monomer. Associates with the 60S ribosomal subunit.

The protein localises to the cytoplasm. Its subcellular location is the nucleus. The protein resides in the nucleolus. Binds to the 60S ribosomal subunit and prevents its association with the 40S ribosomal subunit to form the 80S initiation complex in the cytoplasm. May also be involved in ribosome biogenesis. This chain is Eukaryotic translation initiation factor 6, found in Babesia bovis.